A 422-amino-acid polypeptide reads, in one-letter code: Zinc-regulated transporter 2 (422 aa).

Over 1–27 (MVDLIARDDSVDTCQASNGYNGHAGLR) the chain is Extracellular. A helical membrane pass occupies residues 28–48 (ILAVFIILISSGLGVYFPILS). Residues 49 to 60 (SRYSFIRLPNWC) lie on the Cytoplasmic side of the membrane. The helical transmembrane segment at 61–81 (FFIAKFFGSGVIVATAFVHLL) threads the bilayer. The Extracellular portion of the chain corresponds to 82–99 (QPAAEALGDECLGGTFAE). Residues 100-120 (YPWAFGICLMSLFLLFFTEII) traverse the membrane as a helical segment. The Cytoplasmic segment spans residues 121-262 (THYFVAKTLG…EEDKEQYLNQ (142 aa)). Phosphoserine occurs at positions 148, 149, 162, and 170. The residue at position 188 (threonine 188) is a Phosphothreonine. The helical transmembrane segment at 263–283 (ILAVFILEFGIIFHSVFVGLS) threads the bilayer. Over 284-290 (LSVAGEE) the chain is Extracellular. Residues 291–311 (FETLFIVLTFHQMFEGLGLGT) traverse the membrane as a helical segment. The Cytoplasmic portion of the chain corresponds to 312 to 326 (RVAETNWPESKKYMP). Residues 327 to 347 (WLMGLAFTLTSPIAVAVGIGV) form a helical membrane-spanning segment. The Extracellular portion of the chain corresponds to 348-358 (RHSWIPGSRRA). The helical transmembrane segment at 359–379 (LIANGVFDSISSGILIYTGLV) threads the bilayer. Residues 380 to 400 (ELMAHEFLYSNQFKGPDGLKK) are Cytoplasmic-facing. Residues 401–421 (MLSAYLIMCCGAALMALLGKW) form a helical membrane-spanning segment. A topological domain (extracellular) is located at residue alanine 422.

The protein belongs to the ZIP transporter (TC 2.A.5) family.

The protein localises to the membrane. Low-affinity zinc transport protein. Active in zinc-replete cells and is time-, temperature- and concentration-dependent and prefers zinc over other metals as its substrate. The sequence is that of Zinc-regulated transporter 2 (ZRT2) from Saccharomyces cerevisiae (strain ATCC 204508 / S288c) (Baker's yeast).